The primary structure comprises 216 residues: Somatotropin (216 aa).

The N-terminal stretch at 1–26 is a signal peptide; sequence MAADSQTPWLLTFSLLCLLWPQEAGA. His45 lines the Zn(2+) pocket. Cysteines 78 and 189 form a disulfide. Position 131 is a phosphoserine (Ser131). Position 198 (Glu198) interacts with Zn(2+). A disulfide bridge connects residues Cys206 and Cys214.

The protein belongs to the somatotropin/prolactin family.

It localises to the secreted. Plays an important role in growth control. Its major role in stimulating body growth is to stimulate the liver and other tissues to secrete IGF1. It stimulates both the differentiation and proliferation of myoblasts. It also stimulates amino acid uptake and protein synthesis in muscle and other tissues. In Rattus norvegicus (Rat), this protein is Somatotropin (Gh1).